A 236-amino-acid chain; its full sequence is Methylosome subunit pICln (236 aa).

Ser2 carries the N-acetylserine modification. The interval 88–109 (EESKEPPSDEDEEDNDDIEPIS) is disordered. Residues Ser95, Ser143, Ser192, Ser194, Ser197, and Ser209 each carry the phosphoserine modification. Acidic residues predominate over residues 95-107 (SDEDEEDNDDIEP). Position 222 is a phosphothreonine (Thr222).

Belongs to the pICln (TC 1.A.47) family. In terms of assembly, component of the methylosome, a 20S complex containing at least PRMT5/SKB1, WDR77/MEP50 and CLNS1A/pICln. May mediate SNRPD1 and SNRPD3 methylation. Forms a 6S pICln-Sm complex composed of CLNS1A/pICln, SNRPD1, SNRPD2, SNRPE, SNRPF and SNRPG; ring-like structure where CLNS1A/pICln mimics additional Sm proteins and which is unable to assemble into the core snRNP. Interacts with LSM10 and LSM11.

The protein localises to the cytoplasm. The protein resides in the cytosol. It localises to the nucleus. It is found in the cytoskeleton. In terms of biological role, involved in both the assembly of spliceosomal snRNPs and the methylation of Sm proteins. Chaperone that regulates the assembly of spliceosomal U1, U2, U4 and U5 small nuclear ribonucleoproteins (snRNPs), the building blocks of the spliceosome, and thereby plays an important role in the splicing of cellular pre-mRNAs. Most spliceosomal snRNPs contain a common set of Sm proteins SNRPB, SNRPD1, SNRPD2, SNRPD3, SNRPE, SNRPF and SNRPG that assemble in a heptameric protein ring on the Sm site of the small nuclear RNA to form the core snRNP (Sm core). In the cytosol, the Sm proteins SNRPD1, SNRPD2, SNRPE, SNRPF and SNRPG are trapped in an inactive 6S pICln-Sm complex by the chaperone CLNS1A that controls the assembly of the core snRNP. Dissociation by the SMN complex of CLNS1A from the trapped Sm proteins and their transfer to an SMN-Sm complex triggers the assembly of core snRNPs and their transport to the nucleus. In Mus musculus (Mouse), this protein is Methylosome subunit pICln (Clns1a).